We begin with the raw amino-acid sequence, 809 residues long: Protein PHOX3 (809 aa).

The tract at residues 1 to 22 (MEKQNEEISTDDAETSQSQLVD) is disordered. TPR repeat units lie at residues 126–159 (AQGLKEEGNKLFQKRDYDGAMFKYGEAIKILPKD), 164–199 (SHVRANVASCYMQLEPGEFAKAIHECDLALSVTPDH), 200–233 (NKALLKRARCYEALNKLDLALRDVCMVSKLDPKN), 235–265 (MASEIVEKLKRTLESKGLRINNSVIELPPDY), and 274–311 (AALWAKLGKVRVKKTKKSNQVEEKSEGEGEDVEPEKKN). The tract at residues 288 to 339 (TKKSNQVEEKSEGEGEDVEPEKKNNVLAEKGKEKIKMKVKGKQSDKRSDTSK) is disordered. Position 298 is a phosphoserine (S298). The segment covering 307–339 (PEKKNNVLAEKGKEKIKMKVKGKQSDKRSDTSK) has biased composition (basic and acidic residues). Residues 359 to 438 (NKDVKFVYSD…GTMRFYVVEV (80 aa)) enclose the PB1 domain. 3 TPR repeats span residues 508–541 (SEAMEEVVTSDAAQGPFDRAAQQFQEVAARSLLN), 563–597 (ESVSEQVKTAYECAKKEHANAKEKYEEAMKIKPEC), and 615–648 (SWYYVLVSHLDLKTWPYADVVQFYQSAESNIKKS). A disordered region spans residues 656–686 (ETGKESEPSQAGKTDCLTHEKDLGSSTQNNP). The TPR 9 repeat unit spans residues 709–741 (SIMEYKLDQPFWRESLEAAMEKFELAGTCKDDV).

Carboxylate clamp type tetratricopeptide repeat protein that may act as a potential Hsp90/Hsp70 co-chaperone. Contributes to polar growth of root hairs. The polypeptide is Protein PHOX3 (Arabidopsis thaliana (Mouse-ear cress)).